Reading from the N-terminus, the 148-residue chain is uncharacterized protein (148 aa).

The region spanning M1–S144 is the N-acetyltransferase domain.

This is an uncharacterized protein from Bacillus subtilis (strain 168).